Here is a 400-residue protein sequence, read N- to C-terminus: MARINVVVSFLAALAVVQAAQLLNLDGQKDAVPGSYVVVMNDGLSGLDFESHVKSMAKVQKANALKRDFDNTADGVKFKYNINGWQAYSGKFDNKTIQSILDDPRVNYIEPQRTFRAFGWVTQDNAPSWGLGRISHTSRGRMDYVYDSSAGENVTVYSVDSGVDISHPEFEGRAIWGVNAADNSDVDQIGHGTHTSGTIAGKTYGVAKMAKIVAVKVLDAGGQGTNGGIIQGINWAVNHARQNNVTGKAVMNMSFGGGLSRAINEAASSAVRAGIFMVAAAGNNNEDARYTTPASARGVCAVGASTQNDLKARFSNWGPTLAVYAPGDRIWSAMPDGGRDVMRGTSMAAPHVAGVAAVLISSEKIGTDRLCERIKELSVSSIQSPGADTTDKLLYNGSGQ.

The N-terminal stretch at 1-19 is a signal peptide; that stretch reads MARINVVVSFLAALAVVQA. The propeptide occupies 20 to 118; the sequence is AQLLNLDGQK…IEPQRTFRAF (99 aa). In terms of domain architecture, Inhibitor I9 spans 35 to 116; that stretch reads SYVVVMNDGL…NYIEPQRTFR (82 aa). In terms of domain architecture, Peptidase S8 spans 128 to 400; that stretch reads SWGLGRISHT…DKLLYNGSGQ (273 aa). Asn-153 carries an N-linked (GlcNAc...) asparagine glycan. Active-site charge relay system residues include Asp-160 and His-191. Asn-244 and Asn-252 each carry an N-linked (GlcNAc...) asparagine glycan. The active-site Charge relay system is Ser-346. Residue Asn-396 is glycosylated (N-linked (GlcNAc...) asparagine).

It belongs to the peptidase S8 family.

The protein resides in the secreted. In terms of biological role, secreted subtilisin-like serine protease with keratinolytic activity that contributes to pathogenicity. This Coccidioides posadasii (strain C735) (Valley fever fungus) protein is Subtilisin-like protease CPC735_047380.